The following is a 547-amino-acid chain: Varicidin biosynthesis cluster MFS-type transporer (547 aa).

Over residues 1 to 17 (MTTSTSKNAISKSSQED) the composition is skewed to polar residues. Residues 1 to 33 (MTTSTSKNAISKSSQEDLCSDTKDKGSSGGGNE) form a disordered region. A run of 11 helical transmembrane segments spans residues 47 to 67 (LVLLFVGLALSVFCLSLVCIS), 156 to 176 (LAPSLLLPGLCPCIVAQSVFT), 183 to 203 (WCFWINLPLGGVTAVAVFLFV), 224 to 244 (ALGTCILMPLIICLLLALQWG), 252 to 272 (SWRVVLCLVLFTVLLVAWLYV), 296 to 316 (ILFTFGINGSMFIIVYYVPIW), 330 to 350 (INFLACSGSMSVAAIIAGTLV), 360 to 382 (GQWRIFNYTTLVSIATGLIWRYN), 392 to 412 (AGTLVMFGFGAGSGMQMPFIA), 422 to 442 (ISLGSSLIILIQTMGGAVFLA), and 503 to 523 (CFLVCIVLACLTIIADAGMEW).

The protein belongs to the major facilitator superfamily. TCR/Tet family.

The protein localises to the cell membrane. Its function is as follows. MFS-type transporer; part of the gene cluster that mediates the biosynthesis of varicidin A, an antifungal natural product containing a cis-octahydrodecalin core. This Talaromyces variabilis (Penicillium variabile) protein is Varicidin biosynthesis cluster MFS-type transporer.